The chain runs to 659 residues: Alpha-galactosidase D (659 aa).

The N-terminal stretch at 1–20 (MRALVPMVVAATALASPAPA) is a signal peptide. 3 N-linked (GlcNAc...) asparagine glycosylation sites follow: asparagine 48, asparagine 86, and asparagine 130. A disulfide bridge links cysteine 125 with cysteine 158. Catalysis depends on aspartate 156, which acts as the Nucleophile. N-linked (GlcNAc...) asparagine glycosylation is present at asparagine 183. 201-205 (EWGID) contributes to the substrate binding site. Aspartate 223 acts as the Proton donor in catalysis. N-linked (GlcNAc...) asparagine glycosylation is found at asparagine 438, asparagine 450, asparagine 484, asparagine 551, and asparagine 583.

This sequence belongs to the glycosyl hydrolase 27 family.

The protein localises to the secreted. The catalysed reaction is Hydrolysis of terminal, non-reducing alpha-D-galactose residues in alpha-D-galactosides, including galactose oligosaccharides, galactomannans and galactolipids.. Its function is as follows. Hydrolyzes a variety of simple alpha-D-galactoside as well as more complex molecules such as oligosaccharides and polysaccharides. Active on paranitrophenyl-alpha-galactoside but not on raffinose, locust bean gum and gum guar. This Emericella nidulans (strain FGSC A4 / ATCC 38163 / CBS 112.46 / NRRL 194 / M139) (Aspergillus nidulans) protein is Alpha-galactosidase D (aglD).